The chain runs to 202 residues: NAD(P)H dehydrogenase (quinone) (202 aa).

The Flavodoxin-like domain maps to 7–193 (VLVLYYSMYG…TIARFQGRHF (187 aa)). Residues 13-18 (SMYGHI) and 82-84 (TRF) contribute to the FMN site. Y15 contacts NAD(+). W102 is a binding site for substrate. FMN contacts are provided by residues 117-122 (STATGG) and H137.

This sequence belongs to the WrbA family. The cofactor is FMN.

The enzyme catalyses a quinone + NADH + H(+) = a quinol + NAD(+). It catalyses the reaction a quinone + NADPH + H(+) = a quinol + NADP(+). The polypeptide is NAD(P)H dehydrogenase (quinone) (Rhodospirillum rubrum (strain ATCC 11170 / ATH 1.1.1 / DSM 467 / LMG 4362 / NCIMB 8255 / S1)).